The sequence spans 925 residues: Serine/threonine-protein kinase SIK2 (925 aa).

The 252-residue stretch at 20–271 (YDIEGTLGKG…IAQIKEHKWM (252 aa)) folds into the Protein kinase domain. The residue at position 25 (threonine 25) is a Phosphothreonine. ATP-binding positions include 26–34 (LGKGNFAVV) and lysine 49. An N6-acetyllysine; by EP300 modification is found at lysine 53. The active-site Proton acceptor is the aspartate 142. Threonine 175 is modified (phosphothreonine). The region spanning 295-335 (EFNEQVLRLMHSLGIDQQKTIESLQNKSYNHFAAIYFLLVE) is the UBA domain. At serine 534 the chain carries Phosphoserine. Residues 564 to 586 (ALSSQKREVHNRSPVSFREGRRA) are disordered. Serine 587 is subject to Phosphoserine. 3 disordered regions span residues 630-674 (PNLA…PRQS), 742-776 (SSYP…PLSP), and 800-895 (QPLP…SSYD). Low complexity-rich tracts occupy residues 648–659 (QEEVSQQQESVS) and 742–756 (SSYP…LPRQ). Residues 765–774 (APPFSLTQPL) show a composition bias toward polar residues. The segment covering 808–820 (PRAAPLPTQLQQQ) has biased composition (low complexity). The span at 821 to 833 (QPPPPPPPPPPRQ) shows a compositional bias: pro residues.

The protein belongs to the protein kinase superfamily. CAMK Ser/Thr protein kinase family. SNF1 subfamily. As to quaternary structure, interacts with and phosphorylates TORC2/CRTC2. Requires Mg(2+) as cofactor. Phosphorylated at Thr-175 by STK11/LKB1 in complex with STE20-related adapter-alpha (STRADA) pseudo kinase and CAB39. Phosphorylated at Thr-484 in response to insulin in adipocytes. In terms of processing, acetylation at Lys-53 inhibits kinase activity. Deacetylated by HDAC6.

The protein resides in the cytoplasm. The protein localises to the endoplasmic reticulum membrane. It catalyses the reaction L-seryl-[protein] + ATP = O-phospho-L-seryl-[protein] + ADP + H(+). The catalysed reaction is L-threonyl-[protein] + ATP = O-phospho-L-threonyl-[protein] + ADP + H(+). With respect to regulation, activated by phosphorylation on Thr-175. Functionally, serine/threonine-protein kinase that plays a role in many biological processes such as fatty acid oxidation, autophagy, immune response or glucose metabolism. Phosphorylates 'Ser-794' of IRS1 in insulin-stimulated adipocytes, potentially modulating the efficiency of insulin signal transduction. Inhibits CREB activity by phosphorylating and repressing TORCs, the CREB-specific coactivators. Phosphorylates EP300 and thus inhibits its histone acetyltransferase activity. In turn, regulates the DNA-binding ability of several transcription factors such as PPARA or MLXIPL. Also plays a role in thymic T-cell development. This chain is Serine/threonine-protein kinase SIK2 (SIK2), found in Pongo abelii (Sumatran orangutan).